Consider the following 820-residue polypeptide: LPS-assembly protein LptD (820 aa).

The interval 1 to 27 (MDLSSLPDPLRPTHSRLPARRRDRAEP) is disordered. Positions 13–22 (THSRLPARRR) are enriched in basic residues.

Belongs to the LptD family. In terms of assembly, component of the lipopolysaccharide transport and assembly complex. Interacts with LptE and LptA.

Its function is as follows. Together with LptE, is involved in the assembly of lipopolysaccharide (LPS) at the surface of the outer membrane. In Paracidovorax citrulli (strain AAC00-1) (Acidovorax citrulli), this protein is LPS-assembly protein LptD.